Here is a 441-residue protein sequence, read N- to C-terminus: Protein arginine methyltransferase NDUFAF7, mitochondrial (441 aa).

Residues 1 to 46 (MSVLLRSGLGPLCAVARAAIPFIWRGKYFSSGNEPAENPVTPMLRH) constitute a mitochondrion transit peptide.

Belongs to the NDUFAF7 family. In terms of assembly, interacts with NDUFS2.

It is found in the mitochondrion. The enzyme catalyses L-arginyl-[protein] + 2 S-adenosyl-L-methionine = N(omega),N(omega)'-dimethyl-L-arginyl-[protein] + 2 S-adenosyl-L-homocysteine + 2 H(+). Functionally, arginine methyltransferase involved in the assembly or stability of mitochondrial NADH:ubiquinone oxidoreductase complex (complex I). Acts by mediating symmetric dimethylation of 'Arg-118' of NDUFS2 after it assembles into the complex I, stabilizing the early intermediate complex. The polypeptide is Protein arginine methyltransferase NDUFAF7, mitochondrial (Homo sapiens (Human)).